The chain runs to 1397 residues: Probable cyclin-dependent serine/threonine-protein kinase DDB_G0292550 (1397 aa).

Residues 4–287 form the Protein kinase domain; that stretch reads FQIIELIGSG…TKEALNHPWF (284 aa). ATP-binding positions include 10-18 and K33; that span reads IGSGSYGKV. The Proton acceptor role is filled by D124. Disordered stretches follow at residues 412-567, 671-728, 763-831, 845-949, 996-1101, 1115-1174, 1227-1324, and 1340-1397; these read NNNN…NNNN, PLSI…NNGF, NEMG…NGNN, NNNN…YANH, NGLA…NTHN, NNGF…NSPV, NSAS…SFGL, and KKKK…IVLD. The span at 676–715 shows a compositional bias: low complexity; that stretch reads SQHHNTSSSDTHNNNNNNYNNNNNNNNNINNNNINSIHNQ. Composition is skewed to low complexity over residues 845-941, 1012-1021, 1028-1101, and 1115-1155; these read NNNN…NGNG, NSNNNNSGNN, NTFN…NTHN, and NNGF…TKNN. Residues 1156 to 1171 are compositionally biased toward polar residues; sequence TQFGPNILSSTQTSHN. 2 stretches are compositionally biased toward low complexity: residues 1253–1321 and 1354–1380; these read NNNN…NNNS and SSSQ…SQTQ.

Belongs to the protein kinase superfamily. CMGC Ser/Thr protein kinase family. CDC2/CDKX subfamily.

The catalysed reaction is L-seryl-[protein] + ATP = O-phospho-L-seryl-[protein] + ADP + H(+). It carries out the reaction L-threonyl-[protein] + ATP = O-phospho-L-threonyl-[protein] + ADP + H(+). This Dictyostelium discoideum (Social amoeba) protein is Probable cyclin-dependent serine/threonine-protein kinase DDB_G0292550.